A 181-amino-acid polypeptide reads, in one-letter code: TATA-box-binding protein (181 aa).

2 repeat units span residues 7-83 (IVNV…IKEL) and 98-173 (VQNM…SKTL).

It belongs to the TBP family.

General factor that plays a role in the activation of archaeal genes transcribed by RNA polymerase. Binds specifically to the TATA box promoter element which lies close to the position of transcription initiation. In Methanococcus maripaludis (strain C6 / ATCC BAA-1332), this protein is TATA-box-binding protein.